We begin with the raw amino-acid sequence, 34 residues long: Omega-ctenitoxin-Pn2a (34 aa).

Intrachain disulfides connect Cys2/Cys16, Cys9/Cys26, and Cys15/Cys28.

The protein belongs to the neurotoxin 02 (plectoxin) family. 01 (Tx3) subfamily. Expressed by the venom gland.

The protein localises to the secreted. In terms of biological role, inhibits all known high-voltage activated calcium channels (L-, P/Q- and R-type currents) (Cav), and most effectively the P/Q- (Cav2.1/CACNA1A) and R-type (Cav2.3/CACNA1E) currents. In rat brain, inhibits glutamate release, neuronal death and loss of neurotransmission in the hippocampus resulting from ischemia. In vivo, induces rapid general flaccid paralysis followed by death in 10-30 minutes at dose levels of 5 ug per mouse. This chain is Omega-ctenitoxin-Pn2a, found in Phoneutria nigriventer (Brazilian armed spider).